The chain runs to 571 residues: E3 ubiquitin-protein ligase RNF168 (571 aa).

Residues 16-55 (CGICMEILVEPVTLPCNHTLCKPCFQSTVEKASLCCPFCR) form an RING-type zinc finger. Residue Ser70 is modified to Phosphoserine. The short motif at 110 to 128 (LSKPGELRREYEEEISKVA) is the LR motif 1 element. The residue at position 134 (Ser134) is a Phosphoserine. Positions 143–151 (EEYIQRLLA) match the UMI motif motif. Disordered regions lie at residues 151–174 (AEEE…QLKS) and 191–292 (EGSI…GADS). Positions 168–191 (MEEQLKSDEELARKLSIDINNFCE) match the MIU motif 1 motif. At Ser197 the chain carries Phosphoserine. The span at 202–214 (RKSDPVTPKSEKK) shows a compositional bias: basic and acidic residues. A Glycyl lysine isopeptide (Lys-Gly) (interchain with G-Cter in SUMO2) cross-link involves residue Lys210. Residues 231–242 (PKSQFGSASHSE) show a composition bias toward polar residues. A compositionally biased stretch (basic and acidic residues) spans 243 to 263 (AVQEVRKDSVSKDIDSSDRKS). Phosphothreonine is present on Thr362. Disordered stretches follow at residues 390-422 (NQES…EETE) and 459-560 (KEQM…ISQK). Residues Ser411, Ser414, and Ser415 each carry the phosphoserine modification. The MIU motif 2 motif lies at 439–462 (RHKQEEQDRLLALQLQKEVDKEQM). Residues 466–477 (RQKGSPDEYHLR) carry the LR motif 2 motif. At Ser470 the chain carries Phosphoserine. A compositionally biased stretch (basic and acidic residues) spans 508 to 519 (PTPERGSRDKNR). Polar residues-rich tracts occupy residues 520-530 (QVSLKMQLKQS) and 549-560 (SAHSLQPSISQK). Lys528 is covalently cross-linked (Glycyl lysine isopeptide (Lys-Gly) (interchain with G-Cter in SUMO2)).

Belongs to the RNF168 family. In terms of assembly, monomer. Interacts with UBE2N/UBC13. Sumoylated with SUMO1 by PIAS4 in response to double-strand breaks (DSBs). In terms of processing, ubiquitinated.

It is found in the nucleus. The catalysed reaction is S-ubiquitinyl-[E2 ubiquitin-conjugating enzyme]-L-cysteine + [acceptor protein]-L-lysine = [E2 ubiquitin-conjugating enzyme]-L-cysteine + N(6)-ubiquitinyl-[acceptor protein]-L-lysine.. Its pathway is protein modification; protein ubiquitination. In terms of biological role, E3 ubiquitin-protein ligase required for accumulation of repair proteins to sites of DNA damage. Acts with UBE2N/UBC13 to amplify the RNF8-dependent histone ubiquitination. Recruited to sites of DNA damage at double-strand breaks (DSBs) by binding to ubiquitinated histone H2A and H2AX and amplifies the RNF8-dependent H2A ubiquitination, promoting the formation of 'Lys-63'-linked ubiquitin conjugates. This leads to concentrate ubiquitinated histones H2A and H2AX at DNA lesions to the threshold required for recruitment of TP53BP1 and BRCA1. Also recruited at DNA interstrand cross-links (ICLs) sites and promotes accumulation of 'Lys-63'-linked ubiquitination of histones H2A and H2AX, leading to recruitment of FAAP20/C1orf86 and Fanconi anemia (FA) complex, followed by interstrand cross-link repair. H2A ubiquitination also mediates the ATM-dependent transcriptional silencing at regions flanking DSBs in cis, a mechanism to avoid collision between transcription and repair intermediates. Also involved in class switch recombination in immune system, via its role in regulation of DSBs repair. Following DNA damage, promotes the ubiquitination and degradation of JMJD2A/KDM4A in collaboration with RNF8, leading to unmask H4K20me2 mark and promote the recruitment of TP53BP1 at DNA damage sites. Not able to initiate 'Lys-63'-linked ubiquitination in vitro; possibly due to partial occlusion of the UBE2N/UBC13-binding region. Catalyzes monoubiquitination of 'Lys-13' and 'Lys-15' of nucleosomal histone H2A (H2AK13Ub and H2AK15Ub, respectively). The chain is E3 ubiquitin-protein ligase RNF168 from Homo sapiens (Human).